A 450-amino-acid polypeptide reads, in one-letter code: Glutamyl-tRNA(Gln) amidotransferase subunit A, mitochondrial (450 aa).

Residues lysine 47 and serine 122 each act as charge relay system in the active site. Residue serine 146 is the Acyl-ester intermediate of the active site.

The protein belongs to the amidase family. GatA subfamily. In terms of assembly, subunit of the heterotrimeric GatFAB amidotransferase (AdT) complex, composed of A, B and F subunits.

It localises to the mitochondrion. It catalyses the reaction L-glutamyl-tRNA(Gln) + L-glutamine + ATP + H2O = L-glutaminyl-tRNA(Gln) + L-glutamate + ADP + phosphate + H(+). Functionally, allows the formation of correctly charged Gln-tRNA(Gln) through the transamidation of misacylated Glu-tRNA(Gln) in the mitochondria. The reaction takes place in the presence of glutamine and ATP through an activated gamma-phospho-Glu-tRNA(Gln). The polypeptide is Glutamyl-tRNA(Gln) amidotransferase subunit A, mitochondrial (Candida albicans (strain SC5314 / ATCC MYA-2876) (Yeast)).